Consider the following 642-residue polypeptide: Threonine--tRNA ligase (642 aa).

Residues 1-61 enclose the TGS domain; sequence MPVITLPDGS…ENDAQLSIIT (61 aa). The interval 243-534 is catalytic; the sequence is DHRKIGKQLD…LTEEFAGFFP (292 aa). Residues cysteine 334, histidine 385, and histidine 511 each coordinate Zn(2+).

Belongs to the class-II aminoacyl-tRNA synthetase family. As to quaternary structure, homodimer. The cofactor is Zn(2+).

Its subcellular location is the cytoplasm. The enzyme catalyses tRNA(Thr) + L-threonine + ATP = L-threonyl-tRNA(Thr) + AMP + diphosphate + H(+). In terms of biological role, catalyzes the attachment of threonine to tRNA(Thr) in a two-step reaction: L-threonine is first activated by ATP to form Thr-AMP and then transferred to the acceptor end of tRNA(Thr). Also edits incorrectly charged L-seryl-tRNA(Thr). The sequence is that of Threonine--tRNA ligase from Enterobacter sp. (strain 638).